The sequence spans 299 residues: Tetrahydromethanopterin S-methyltransferase subunit E (299 aa).

The next 6 membrane-spanning stretches (helical) occupy residues 57-79 (AISG…AWAL), 89-111 (AIIV…AFLG), 132-154 (HIGP…AYLA), 164-183 (LPLV…SSTG), 227-246 (FCSR…IIFL), and 261-283 (LVTK…AVIN).

Belongs to the MtrE family. In terms of assembly, the complex is composed of 8 subunits; MtrA, MtrB, MtrC, MtrD, MtrE, MtrF, MtrG and MtrH.

The protein resides in the cell membrane. The catalysed reaction is 5-methyl-5,6,7,8-tetrahydromethanopterin + coenzyme M + 2 Na(+)(in) = 5,6,7,8-tetrahydromethanopterin + methyl-coenzyme M + 2 Na(+)(out). The protein operates within one-carbon metabolism; methanogenesis from CO(2); methyl-coenzyme M from 5,10-methylene-5,6,7,8-tetrahydromethanopterin: step 2/2. Functionally, part of a complex that catalyzes the formation of methyl-coenzyme M and tetrahydromethanopterin from coenzyme M and methyl-tetrahydromethanopterin. This is an energy-conserving, sodium-ion translocating step. The protein is Tetrahydromethanopterin S-methyltransferase subunit E of Methanococcus maripaludis (strain DSM 14266 / JCM 13030 / NBRC 101832 / S2 / LL).